A 304-amino-acid polypeptide reads, in one-letter code: MATH domain and coiled-coil domain-containing protein At2g42470 (304 aa).

Residues 6–123 (QTSFTFEIDN…NNKLIIEVQV (118 aa)) form the MATH domain. A coiled-coil region spans residues 219 to 292 (FKVDWLKKKL…LKIELDRTRR (74 aa)).

This chain is MATH domain and coiled-coil domain-containing protein At2g42470, found in Arabidopsis thaliana (Mouse-ear cress).